A 92-amino-acid chain; its full sequence is Small ribosomal subunit protein uS19 (92 aa).

This sequence belongs to the universal ribosomal protein uS19 family.

Protein S19 forms a complex with S13 that binds strongly to the 16S ribosomal RNA. The polypeptide is Small ribosomal subunit protein uS19 (rpsS) (Rickettsia prowazekii (strain Madrid E)).